Consider the following 545-residue polypeptide: Carboxypeptidase Y homolog A (545 aa).

An N-terminal signal peptide occupies residues 1–18 (MKSSLALALLVGGAIASG). Residues 19 to 125 (PQQQVLREPV…RLDTYDLRVK (107 aa)) constitute a propeptide that is removed on maturation. 5 disulfides stabilise this stretch: Cys179–Cys418, Cys313–Cys327, Cys337–Cys360, Cys344–Cys353, and Cys382–Cys388. An N-linked (GlcNAc...) asparagine glycan is attached at Asn210. Ser266 is a catalytic residue. Asp457 is a catalytic residue. Residues Asn487 and Asn507 are each glycosylated (N-linked (GlcNAc...) asparagine). The active site involves His518.

It belongs to the peptidase S10 family.

It localises to the vacuole. The enzyme catalyses Release of a C-terminal amino acid with broad specificity.. In terms of biological role, vacuolar carboxypeptidase involved in degradation of small peptides. Digests preferentially peptides containing an aliphatic or hydrophobic residue in P1' position, as well as methionine, leucine or phenylalanine in P1 position of ester substrate. The chain is Carboxypeptidase Y homolog A (CPYA) from Ajellomyces capsulatus (strain NAm1 / WU24) (Darling's disease fungus).